Reading from the N-terminus, the 287-residue chain is MKLYAKLLLCSICVAFIAVRWSAPSFNEESLKGARVLVTGASTGIGEQLAYHYARLGAQIVITARRGNVLEQVVSKCREMGAQKAFYIPADMANPSDADLVVKYAIEQLGGLDYLVLNHIGPSPYQMWDGDVQHTRWLLEVNFLSYLQMAQKALPTLEKSKGSIVVVSSLLGKICGPFALPYASTKFALNGFFGGLQNELAMQKSNVSITICILGLIDTDSAMEKIKGYINMTAYPSHEAALQIIQAGATRQSESFYPWYTFYATLFRDWFPYLRDKVIQNSYTYNP.

Positions 1–22 (MKLYAKLLLCSICVAFIAVRWS) are cleaved as a signal peptide. Residues 40–66 (GAST…TARR), 91–92 (DM), and 118–120 (NHI) contribute to the NADP(+) site. Ser-169 lines the substrate pocket. Residue Tyr-182 is the Proton acceptor of the active site. Residues 182-186 (YASTK) and 215-221 (GLIDTDS) each bind NADP(+).

Belongs to the short-chain dehydrogenases/reductases (SDR) family.

The protein resides in the secreted. The enzyme catalyses cortisone + NADPH + H(+) = cortisol + NADP(+). Unidirectional NADP(+)-dependent cortisol dehydrogenase (in vitro). This Danio rerio (Zebrafish) protein is Hydroxysteroid 11-beta-dehydrogenase 1-like protein (hsd11b1l).